A 400-amino-acid chain; its full sequence is Phosphoglycerate kinase (400 aa).

Substrate is bound by residues 21 to 23, Arg36, 59 to 62, Arg119, and Arg160; these read DFN and HLGR. Residues Lys211, Glu329, and 356 to 359 each bind ATP; that span reads GGDS.

This sequence belongs to the phosphoglycerate kinase family. Monomer.

The protein resides in the cytoplasm. It carries out the reaction (2R)-3-phosphoglycerate + ATP = (2R)-3-phospho-glyceroyl phosphate + ADP. It functions in the pathway carbohydrate degradation; glycolysis; pyruvate from D-glyceraldehyde 3-phosphate: step 2/5. This Lactiplantibacillus plantarum (strain ATCC BAA-793 / NCIMB 8826 / WCFS1) (Lactobacillus plantarum) protein is Phosphoglycerate kinase.